We begin with the raw amino-acid sequence, 264 residues long: Galectin-3 (264 aa).

The disordered stretch occupies residues 1-105; sequence MADSFSLNDA…GAFPGQPGAP (105 aa). Residue Ala2 is modified to N-acetylalanine. The residue at position 6 (Ser6) is a Phosphoserine; by CK1. 8 repeat units span residues 35-43, 44-52, 53-61, 62-70, 71-79, 80-88, 89-97, and 98-107. Residues 35–114 are 9 X 9 AA tandem repeats of Y-P-G-X(3)-P-[GS]-A; it reads YPGAAYPGAY…PGAYPQCSGG (80 aa). Over residues 37-46 the composition is skewed to low complexity; it reads GAAYPGAYPG. Positions 47–75 are enriched in pro residues; the sequence is QAPPGAYPGQAPPGAYPGQAPPSAYPGPT. Low complexity predominate over residues 76 to 105; sequence APGAYPGPTAPGAYPGQPAPGAFPGQPGAP. Residues 108–114 form a 9; truncated repeat; sequence YPQCSGG. The Galectin domain occupies 132–262; that stretch reads YDLPLPGGVM…DITLTSANHA (131 aa). Residue 195 to 201 coordinates a beta-D-galactoside; sequence WGKEERQ. Position 202 is a phosphoserine (Ser202). Positions 240 to 255 match the Nuclear export signal motif; it reads KNLREISQLGISGDIT.

As to quaternary structure, probably forms homo- or heterodimers. Interacts with DMBT1. Interacts with CD6 and ALCAM. Forms a complex with the ITGA3, ITGB1 and CSPG4. Interacts with LGALS3BP, LYPD3, ZFTRAF1 and UACA. Interacts with TRIM16; this interaction mediates autophagy of damage endomembranes. Interacts with and inhibits by binding NCR3/NKp30. The highest levels are found in activated macrophages.

The protein resides in the cytoplasm. The protein localises to the nucleus. Its subcellular location is the secreted. Its function is as follows. Galactose-specific lectin which binds IgE. May mediate with the alpha-3, beta-1 integrin the stimulation by CSPG4 of endothelial cells migration. Together with DMBT1, required for terminal differentiation of columnar epithelial cells during early embryogenesis. In the nucleus: acts as a pre-mRNA splicing factor. Involved in acute inflammatory responses including neutrophil activation and adhesion, chemoattraction of monocytes macrophages, opsonization of apoptotic neutrophils, and activation of mast cells. Together with TRIM16, coordinates the recognition of membrane damage with mobilization of the core autophagy regulators ATG16L1 and BECN1 in response to damaged endomembranes. When secreted, interacts with NK cell-activating receptor NCR3/NKp30 acting as an inhibitory ligand which antagonizes NK cell attack. The polypeptide is Galectin-3 (Lgals3) (Mus musculus (Mouse)).